A 610-amino-acid chain; its full sequence is UvrABC system protein C (610 aa).

Residues serine 16–valine 94 enclose the GIY-YIG domain. The UVR domain maps to aspartate 204–valine 239.

This sequence belongs to the UvrC family. As to quaternary structure, interacts with UvrB in an incision complex.

It localises to the cytoplasm. Its function is as follows. The UvrABC repair system catalyzes the recognition and processing of DNA lesions. UvrC both incises the 5' and 3' sides of the lesion. The N-terminal half is responsible for the 3' incision and the C-terminal half is responsible for the 5' incision. The sequence is that of UvrABC system protein C from Salmonella dublin (strain CT_02021853).